A 236-amino-acid polypeptide reads, in one-letter code: Rho-related GTP-binding protein RhoV (236 aa).

The disordered stretch occupies residues Met-1–Pro-27. A compositionally biased stretch (pro residues) spans Glu-10–Pro-20. Phosphoserine is present on Ser-25. GTP is bound by residues Gly-38–Ser-45, Asp-85–Gln-89, and Thr-143–Asp-146. Cys-234 carries the S-palmitoyl cysteine lipid modification.

It belongs to the small GTPase superfamily. Rho family. Interacts with PAK2. Mg(2+) serves as cofactor.

It localises to the cell membrane. The protein localises to the endosome membrane. Functionally, plays a role in the control of the actin cytoskeleton via activation of the JNK pathway. This Mus musculus (Mouse) protein is Rho-related GTP-binding protein RhoV.